The sequence spans 413 residues: Metacaspase-1A (413 aa).

A disordered region spans residues 1–104 (MQNHHHQQSS…PTDPVAFGHG (104 aa)). Pro residues predominate over residues 36–47 (SPQPGYGAPPPH). Positions 49–58 (GYGQPPSGYG) are enriched in low complexity. A compositionally biased stretch (polar residues) spans 75–85 (GMNQYQNTYSH). Catalysis depends on residues His-204 and Cys-260.

This sequence belongs to the peptidase C14B family.

In terms of biological role, involved in cell death (apoptosis). Required for the apoptotic-like loss of membrane phospholipid asymmetry at stationary phase and facilitates growth under conditions of endoplasmic reticulum stress. This Aspergillus fumigatus (strain CBS 144.89 / FGSC A1163 / CEA10) (Neosartorya fumigata) protein is Metacaspase-1A (casA).